A 277-amino-acid chain; its full sequence is Homeobox protein Nkx-6.2 (277 aa).

The interval 89 to 142 is repressor domain; sequence AGVYFGPAAAVARGYPKPLAELPGRPPIFWPGVVQGAPWRDPRLAGPAPAGGVL. Disordered regions lie at residues 132–155 and 210–250; these read LAGPAPAGGVLDKDGKKKHSRPTF and EMAS…DDEK. The segment at residues 148 to 207 is a DNA-binding region (homeobox); sequence KKHSRPTFSGQQIFALEKTFEQTKYLAGPERARLAYSLGMTESQVKVWFQNRRTKWRKRH. The segment covering 216–226 has biased composition (basic and acidic residues); the sequence is KKQDSDAEKLK.

Highest expression in brain.

Its subcellular location is the nucleus. Its function is as follows. Transcription factor with repressor activity involved in the regulation of axon-glial interactions at myelin paranodes in oligodendrocytes. Binds to the consensus DNA sequence 5'-(A/T)TTAATGA-3'. In oligodendrocytes, binds to MBP and PLP1 promoter regions. The chain is Homeobox protein Nkx-6.2 (NKX6-2) from Homo sapiens (Human).